A 395-amino-acid polypeptide reads, in one-letter code: Neuromedin-U receptor 2 (395 aa).

Topologically, residues 1 to 41 (MGKLENASWIHDSLMKYLNSTEEYLAYLCGPKRSDLSLPVS) are extracellular. N-linked (GlcNAc...) asparagine glycans are attached at residues Asn6 and Asn19. Residues 42–62 (VVYALIFVVGVIGNLLVCLVI) form a helical membrane-spanning segment. Residues 63–74 (ARHQTLKTPTNY) lie on the Cytoplasmic side of the membrane. The helical transmembrane segment at 75–95 (YLFSLAVSDLLVLLLGMPLEV) threads the bilayer. The Extracellular portion of the chain corresponds to 96 to 115 (YELWHNYPFLFGPVGCYFKT). Residues Cys111 and Cys196 are joined by a disulfide bond. Residues 116–138 (ALFETVCFASILSVTTVSIERYV) traverse the membrane as a helical segment. Residues 139-157 (AIVHPFRAKLESTRRRALR) are Cytoplasmic-facing. Residues 158-178 (ILSLVWSFSVVFSLPNTSIHG) traverse the membrane as a helical segment. The Extracellular segment spans residues 179–212 (IKFQQFPNGSSVPGSATCTVTKPIWVYNFIIQAT). Residue Asn186 is glycosylated (N-linked (GlcNAc...) asparagine). A helical membrane pass occupies residues 213–233 (SFLFYILPMTLISVLYYLMGL). Residues 234 to 257 (RLKRDESLEADKVTVNIHRPSRKS) are Cytoplasmic-facing. Residues 258–278 (VTKMLFVLVLVFAICWTPFHV) form a helical membrane-spanning segment. Topologically, residues 279-293 (DRLFFSFVDEWTESL) are extracellular. Residues 294–314 (AAVFNLIHVVSGVFFYLSSAV) form a helical membrane-spanning segment. At 315–395 (NPIIYNLLSR…TTVPCVEEVP (81 aa)) the chain is on the cytoplasmic side.

This sequence belongs to the G-protein coupled receptor 1 family. As to expression, expressed primarily in brain tissues, more specifically in medulla and spinal cord. Widespread distribution in peripheral tissues.

It is found in the cell membrane. Its function is as follows. Receptor for the neuromedin-U and neuromedin-S neuropeptides. This is Neuromedin-U receptor 2 (Nmur2) from Mus musculus (Mouse).